A 294-amino-acid chain; its full sequence is Homoserine kinase (294 aa).

Residue 84-94 coordinates ATP; the sequence is PFSRGLGSSSA.

This sequence belongs to the GHMP kinase family. Homoserine kinase subfamily.

It is found in the cytoplasm. It carries out the reaction L-homoserine + ATP = O-phospho-L-homoserine + ADP + H(+). The protein operates within amino-acid biosynthesis; L-threonine biosynthesis; L-threonine from L-aspartate: step 4/5. Functionally, catalyzes the ATP-dependent phosphorylation of L-homoserine to L-homoserine phosphate. The sequence is that of Homoserine kinase from Campylobacter concisus (strain 13826).